The sequence spans 109 residues: Large ribosomal subunit protein uL22 (109 aa).

The protein belongs to the universal ribosomal protein uL22 family. Part of the 50S ribosomal subunit.

Its function is as follows. This protein binds specifically to 23S rRNA; its binding is stimulated by other ribosomal proteins, e.g. L4, L17, and L20. It is important during the early stages of 50S assembly. It makes multiple contacts with different domains of the 23S rRNA in the assembled 50S subunit and ribosome. Functionally, the globular domain of the protein is located near the polypeptide exit tunnel on the outside of the subunit, while an extended beta-hairpin is found that lines the wall of the exit tunnel in the center of the 70S ribosome. This chain is Large ribosomal subunit protein uL22, found in Bordetella petrii (strain ATCC BAA-461 / DSM 12804 / CCUG 43448).